The primary structure comprises 254 residues: MQPIRVVLAGATGKVGQVLARALVQEPGFALTGAIARQGGGRNLAELVPLGGRPGPTVHGSLEEFLAAGGEADVLVDFSVAEAGRRTIPAAIEASIAPVVGTTGFQPGETETWAAMCRKRGLGGAFIANYAVGIMLLMRFAEEAHRFFPDVEIIEMHHKTKLDAPSGTALRTKARLERGRGDLAAAEVPVHSVRLPGLVAHQEVIFGGLGQTLTIRHDAPSREAYVPGVLMTCRWVLREKRVAFDLEEVAFPRT.

Residues 10 to 15 and 101 to 103 each bind NAD(+); these read GATGKV and GTT. H157 functions as the Proton donor/acceptor in the catalytic mechanism. H158 lines the (S)-2,3,4,5-tetrahydrodipicolinate pocket. The active-site Proton donor is the K161. 167 to 168 is a binding site for (S)-2,3,4,5-tetrahydrodipicolinate; sequence GT.

It belongs to the DapB family.

Its subcellular location is the cytoplasm. It catalyses the reaction (S)-2,3,4,5-tetrahydrodipicolinate + NAD(+) + H2O = (2S,4S)-4-hydroxy-2,3,4,5-tetrahydrodipicolinate + NADH + H(+). The enzyme catalyses (S)-2,3,4,5-tetrahydrodipicolinate + NADP(+) + H2O = (2S,4S)-4-hydroxy-2,3,4,5-tetrahydrodipicolinate + NADPH + H(+). It functions in the pathway amino-acid biosynthesis; L-lysine biosynthesis via DAP pathway; (S)-tetrahydrodipicolinate from L-aspartate: step 4/4. Its function is as follows. Catalyzes the conversion of 4-hydroxy-tetrahydrodipicolinate (HTPA) to tetrahydrodipicolinate. The chain is 4-hydroxy-tetrahydrodipicolinate reductase from Symbiobacterium thermophilum (strain DSM 24528 / JCM 14929 / IAM 14863 / T).